The primary structure comprises 432 residues: Cyclic GMP-AMP synthase-like receptor (432 aa).

ATP contacts are provided by residues Ser-59 and 71–73 (EFD). 3 residues coordinate Mg(2+): Glu-71, Asp-73, and Asp-205. Residues Asp-205 and 255–262 (KQTCSVLE) each bind GTP. ATP is bound by residues 259-262 (SVLE), Lys-284, and 303-307 (TYALK).

It belongs to the mab-21 family. Requires Mg(2+) as cofactor. It depends on Mn(2+) as a cofactor.

It catalyses the reaction GTP + ATP = 2',3'-cGAMP + 2 diphosphate. It carries out the reaction GTP + ATP = pppGp(2'-5')A + diphosphate. The catalysed reaction is pppGp(2'-5')A = 2',3'-cGAMP + diphosphate. Its function is as follows. Nucleotidyltransferase that catalyzes the formation of cyclic GMP-AMP (2',3'-cGAMP) from ATP and GTP and plays a key role in innate immunity. Directly binds some unknown ligand, activating the nucleotidyltransferase activity, leading to synthesis of 2',3'-cGAMP, a second messenger that binds to and activates Sting, thereby triggering the immune response via activation of the NF-kappa-B transcription factor. The protein is Cyclic GMP-AMP synthase-like receptor of Pocillopora damicornis (Cauliflower coral).